A 614-amino-acid polypeptide reads, in one-letter code: Putative Na(+)/H(+) antiporter YjbQ (614 aa).

13 helical membrane-spanning segments follow: residues 3 to 23, 32 to 52, 57 to 77, 107 to 127, 130 to 150, 163 to 183, 193 to 213, 225 to 244, 248 to 267, 282 to 302, 307 to 327, 338 to 358, and 368 to 388; these read HTSV…PILL, VVVA…NLVV, WLQT…GLEI, IFVG…LAGF, NAFL…VPTL, IILL…AVFS, MWLL…GRVF, GTIQ…LVAL, LGAE…SLLS, GFLI…WTLF, ILIM…IPVM, IFAS…AATI, and NMSG…PICF. In terms of domain architecture, RCK N-terminal spans 401 to 519; the sequence is KKTITFIGAN…EQGISIFSIL (119 aa). One can recognise an RCK C-terminal domain in the interval 533-614; it reads PGVMKLLTNQ…VTDLKKTLEG (82 aa).

The protein belongs to the monovalent cation:proton antiporter 2 (CPA2) transporter (TC 2.A.37) family.

The protein resides in the cell membrane. With respect to regulation, binds cyclic di-AMP (c-di-AMP), which may regulate the transporter activity. Probable Na(+)/H(+) antiporter. The protein is Putative Na(+)/H(+) antiporter YjbQ of Bacillus subtilis (strain 168).